We begin with the raw amino-acid sequence, 202 residues long: Large ribosomal subunit protein uL4 (202 aa).

The disordered stretch occupies residues 47 to 67; it reads KTKAEVSGGGVKPWKQKGTGR.

Belongs to the universal ribosomal protein uL4 family. In terms of assembly, part of the 50S ribosomal subunit.

Functionally, one of the primary rRNA binding proteins, this protein initially binds near the 5'-end of the 23S rRNA. It is important during the early stages of 50S assembly. It makes multiple contacts with different domains of the 23S rRNA in the assembled 50S subunit and ribosome. In terms of biological role, forms part of the polypeptide exit tunnel. The chain is Large ribosomal subunit protein uL4 from Dichelobacter nodosus (strain VCS1703A).